Consider the following 295-residue polypeptide: Glycine--tRNA ligase alpha subunit (295 aa).

Belongs to the class-II aminoacyl-tRNA synthetase family. In terms of assembly, tetramer of two alpha and two beta subunits.

Its subcellular location is the cytoplasm. The catalysed reaction is tRNA(Gly) + glycine + ATP = glycyl-tRNA(Gly) + AMP + diphosphate. This chain is Glycine--tRNA ligase alpha subunit, found in Shouchella clausii (strain KSM-K16) (Alkalihalobacillus clausii).